Here is a 200-residue protein sequence, read N- to C-terminus: Molybdenum cofactor guanylyltransferase (200 aa).

GTP contacts are provided by residues 15 to 17 (LSG), lysine 28, aspartate 74, and aspartate 104. Aspartate 104 provides a ligand contact to Mg(2+).

The protein belongs to the MobA family. As to quaternary structure, monomer. Requires Mg(2+) as cofactor.

It localises to the cytoplasm. It carries out the reaction Mo-molybdopterin + GTP + H(+) = Mo-molybdopterin guanine dinucleotide + diphosphate. Its function is as follows. Transfers a GMP moiety from GTP to Mo-molybdopterin (Mo-MPT) cofactor (Moco or molybdenum cofactor) to form Mo-molybdopterin guanine dinucleotide (Mo-MGD) cofactor. This is Molybdenum cofactor guanylyltransferase from Pseudomonas fluorescens (strain SBW25).